The sequence spans 62 residues: Large ribosomal subunit protein bL28 (62 aa).

It belongs to the bacterial ribosomal protein bL28 family.

This chain is Large ribosomal subunit protein bL28, found in Koribacter versatilis (strain Ellin345).